A 2025-amino-acid polypeptide reads, in one-letter code: Pericentriolar material 1 protein (2025 aa).

A disordered region spans residues 1-91; sequence MATGGGPFEE…TFPHSRYMTQ (91 aa). At Ala2 the chain carries N-acetylalanine. The tract at residues 2–1458 is mediates interaction with DZIP1; sequence ATGGGPFEEV…TWVASNSELT (1457 aa). Residues Ser65, Ser68, Ser69, Ser93, Ser110, Ser116, Ser119, and Ser159 each carry the phosphoserine modification. The tract at residues 111–140 is disordered; it reads DLDQRSIGSDSQGRATAANNKRQLSENRKP. Over residues 116 to 132 the composition is skewed to polar residues; that stretch reads SIGSDSQGRATAANNKR. Residues 218–301 are a coiled coil; it reads KASSMREDLV…QLRALQGRQA (84 aa). The tract at residues 354–390 is disordered; sequence RDSQPPAVPDNRRQAESLSLTREISQSRNPSVSEHLP. The span at 369 to 385 shows a compositional bias: polar residues; the sequence is ESLSLTREISQSRNPSV. Phosphoserine is present on Ser370. Residue Ser372 is modified to Phosphoserine; by PLK4. Ser384 carries the phosphoserine modification. The residue at position 399 (Lys399) is an N6-acetyllysine. Coiled-coil stretches lie at residues 399–426 and 492–518; these read KMRV…QHLN and AEKL…YEQT. Disordered stretches follow at residues 528–553 and 565–586; these read ENTK…VTNI and VNTN…VNSN. Over residues 531 to 540 the composition is skewed to acidic residues; it reads KDEETEESEY. Ser593 bears the Phosphoserine mark. The interval 620-654 is disordered; it reads AHGEDEEEEVEEEGVSGASLSSRRSSLVDEAPEDE. The segment covering 623–633 has biased composition (acidic residues); sequence EDEEEEVEEEG. Residues 634-644 are compositionally biased toward low complexity; that stretch reads VSGASLSSRRS. A Phosphoserine modification is found at Ser644. Coiled coils occupy residues 652 to 772 and 822 to 856; these read EDEE…PDLQ and SDMR…GLAE. Thr857 carries the post-translational modification Phosphothreonine. Phosphoserine is present on residues Ser859, Ser864, Ser867, and Ser870. Disordered stretches follow at residues 866-885 and 913-940; these read RSDG…EKTM and TDEE…NQNS. Residues 870-879 are compositionally biased toward polar residues; it reads SENLCTPQQS. Residue Thr875 is modified to Phosphothreonine. Ser957, Ser974, Ser985, and Ser988 each carry phosphoserine. 2 coiled-coil regions span residues 985–1017 and 1061–1086; these read SELS…CQTL and QLTW…QNQH. Disordered stretches follow at residues 1081-1105 and 1149-1213; these read RQQN…PSSP and FSQN…YDQE. Over residues 1086–1096 the composition is skewed to basic and acidic residues; the sequence is HPEKPRSKERG. Positions 1149–1169 are enriched in polar residues; it reads FSQNVSTPTEQQQPLAQNPSG. 2 positions are modified to phosphoserine: Ser1182 and Ser1185. Residues 1189–1198 are compositionally biased toward basic and acidic residues; the sequence is EKQRNQKQPE. 5 positions are modified to phosphoserine: Ser1228, Ser1254, Ser1257, Ser1259, and Ser1260. Residues 1230 to 1310 are disordered; the sequence is EKATNSNRKN…STQLKSRVKN (81 aa). The span at 1268–1285 shows a compositional bias: polar residues; it reads TTVTKTFKTRKASAQASL. Phosphoserine occurs at positions 1315 and 1317. Residues 1319–1338 form a disordered region; that stretch reads SSTCEPCKNRNRHSAQTEEP. At Thr1466 the chain carries Phosphothreonine. A phosphoserine mark is found at Ser1571, Ser1695, Ser1729, Ser1766, Ser1769, Ser1777, and Ser1783. The interval 1720–1943 is disordered; it reads KRILEGDHGS…AGSPDTESPV (224 aa). A compositionally biased stretch (basic and acidic residues) spans 1756–1768; that stretch reads YDAKGPKNVRSDV. Polar residues predominate over residues 1784-1798; that stretch reads INLSKAESQALTNYG. A compositionally biased stretch (acidic residues) spans 1800–1816; the sequence is GEDENEDEEMEDFEESP. Polar residues-rich tracts occupy residues 1818 to 1828, 1849 to 1858, 1879 to 1901, and 1925 to 1934; these read DIQTSLQANTE, ESTNVPSDQE, ENEQ…SSKQ, and AQETPESSLA. Residues Ser1959 and Ser1978 each carry the phosphoserine modification.

It belongs to the PCM1 family. In terms of assembly, self-associates. Interacts with BBS4, BBS8, CETN3, HAP1, NDE1, NDEL1, MAP1LC3B, GABARAPAL2, and GABARAP. Interacts with CEP131; the interaction increases in response to ultraviolet light (UV) radiation. Associates with microtubule; association to microtubule is reduced in response to cellular stress, such as ultraviolet light (UV) radiation or heat shock, in a process that requires p38 MAP kinase signaling. Interacts with C2CD3. Interacts with CFAP263. Interacts with SSX2IP. Interacts with CCDC13. Interacts with CEP290. Interacts with PARD6A. Interacts with KIAA0753/OFIP, CEP20/FOR20 and OFD1; the interaction with CEP20/FOR20 and OFD1 may be mediated by KIAA0753/OFIP. Interacts with CCDC66. Interacts with CCDC61. Interacts with DZIP1; localizes DZIP1 and the associated BBSome to centriolar satellite. Interacts with CSTPP1, TTLL1, TPGS1 and LRRC49. Interacts with CFAP53. In terms of processing, ubiquitinated. Undergoes monoubiquitination catalyzed by the E3 ubiquitin-protein ligase MIB1 in proliferating cells, preventing cilia formation. Monoubiquitination by MIB1 is inhibited in response to cellular stress, such as ultraviolet light (UV) radiation or heat shock, resulting in cilia formation initiation. Phosphorylated on multiple serine and threonine residues by DYRK3 during the G2-to-M transition, after the nuclear-envelope breakdown. Phosphorylation by DYRK3 promotes disassembly of pericentriolar material. Phosphorylation at Ser-372 mediated by PLK4 is required to maintain the integrity of centriolar satellites. In terms of tissue distribution, expressed in the hippocampus and dentate gyrus, the columnar epithelial cells of bronchioles, the olfactory epithelium, the pericardium and the inner segment of the retina.

The protein resides in the cytoplasm. It localises to the cytoskeleton. The protein localises to the microtubule organizing center. It is found in the centrosome. Its subcellular location is the cytoplasmic granule. The protein resides in the centriolar satellite. It localises to the cilium basal body. In terms of biological role, required for centrosome assembly and function. Essential for the correct localization of several centrosomal proteins including CEP250, CETN3, PCNT and NEK2. Required to anchor microtubules to the centrosome. Also involved in cilium biogenesis by recruiting the BBSome, a ciliary protein complex involved in cilium biogenesis, to the centriolar satellites. Recruits the tubulin polyglutamylase complex (TPGC) to centriolar satellites. This Mus musculus (Mouse) protein is Pericentriolar material 1 protein.